A 333-amino-acid chain; its full sequence is Adenosine deaminase (333 aa).

Residues histidine 12 and histidine 14 each coordinate Zn(2+). 2 residues coordinate substrate: histidine 14 and aspartate 16. Pentostatin is bound by residues 14–16 (HLD), serine 141, and glycine 170. Glycine 170 is a substrate binding site. Histidine 197 is a binding site for Zn(2+). The pentostatin site is built by glutamate 200, histidine 221, and aspartate 278. Glutamate 200 (proton donor) is an active-site residue. A Zn(2+)-binding site is contributed by aspartate 278. Residue aspartate 279 coordinates substrate.

It belongs to the metallo-dependent hydrolases superfamily. Adenosine and AMP deaminases family. Adenosine deaminase subfamily. It depends on Zn(2+) as a cofactor.

The enzyme catalyses adenosine + H2O + H(+) = inosine + NH4(+). The catalysed reaction is 2'-deoxyadenosine + H2O + H(+) = 2'-deoxyinosine + NH4(+). Its function is as follows. Catalyzes the hydrolytic deamination of adenosine and 2-deoxyadenosine. This is Adenosine deaminase from Salmonella typhimurium (strain LT2 / SGSC1412 / ATCC 700720).